We begin with the raw amino-acid sequence, 154 residues long: Protein-export protein SecB (154 aa).

The protein belongs to the SecB family. In terms of assembly, homotetramer, a dimer of dimers. One homotetramer interacts with 1 SecA dimer.

Its subcellular location is the cytoplasm. One of the proteins required for the normal export of preproteins out of the cell cytoplasm. It is a molecular chaperone that binds to a subset of precursor proteins, maintaining them in a translocation-competent state. It also specifically binds to its receptor SecA. The protein is Protein-export protein SecB of Blochmanniella pennsylvanica (strain BPEN).